The sequence spans 299 residues: Glycine--tRNA ligase alpha subunit (299 aa).

Belongs to the class-II aminoacyl-tRNA synthetase family. Tetramer of two alpha and two beta subunits.

The protein resides in the cytoplasm. It carries out the reaction tRNA(Gly) + glycine + ATP = glycyl-tRNA(Gly) + AMP + diphosphate. This chain is Glycine--tRNA ligase alpha subunit, found in Pediococcus pentosaceus (strain ATCC 25745 / CCUG 21536 / LMG 10740 / 183-1w).